Consider the following 317-residue polypeptide: tRNA dimethylallyltransferase (317 aa).

16–23 (GPTASGKS) contacts ATP. 18–23 (TASGKS) is a binding site for substrate. 3 interaction with substrate tRNA regions span residues 41-44 (DSAQ), 165-169 (QRIQR), and 247-252 (RCVGYR).

It belongs to the IPP transferase family. Monomer. The cofactor is Mg(2+).

The enzyme catalyses adenosine(37) in tRNA + dimethylallyl diphosphate = N(6)-dimethylallyladenosine(37) in tRNA + diphosphate. Its function is as follows. Catalyzes the transfer of a dimethylallyl group onto the adenine at position 37 in tRNAs that read codons beginning with uridine, leading to the formation of N6-(dimethylallyl)adenosine (i(6)A). The polypeptide is tRNA dimethylallyltransferase (Nitrosomonas eutropha (strain DSM 101675 / C91 / Nm57)).